The chain runs to 394 residues: Actin-related protein 2-A (394 aa).

Residues 160–162 (GDG), 214–218 (RMMKE), and 305–310 (GGSTMY) each bind ATP.

This sequence belongs to the actin family. ARP2 subfamily. Component of the Arp2/3 complex composed of actr2/arp2, actr3/arp3, arpc1b, arpc2, arpc3, arpc4 and arpc5.

The protein resides in the cytoplasm. The protein localises to the cytoskeleton. Its subcellular location is the cell projection. It is found in the nucleus. Its function is as follows. ATP-binding component of the Arp2/3 complex, a multiprotein complex that mediates actin polymerization upon stimulation by nucleation-promoting factor (NPF). The Arp2/3 complex mediates the formation of branched actin networks in the cytoplasm, providing the force for cell motility. Seems to contact the pointed end of the daughter actin filament. In addition to its role in the cytoplasmic cytoskeleton, the Arp2/3 complex also promotes actin polymerization in the nucleus, thereby regulating gene transcription and repair of damaged DNA. The Arp2/3 complex promotes homologous recombination (HR) repair in response to DNA damage by promoting nuclear actin polymerization, leading to drive motility of double-strand breaks (DSBs). The sequence is that of Actin-related protein 2-A (actr2a) from Danio rerio (Zebrafish).